The following is a 265-amino-acid chain: Signal peptidase I (265 aa).

Residues 1 to 19 are Cytoplasmic-facing; it reads MQIDTKTNTNKTTAQEWKS. A helical membrane pass occupies residues 20 to 40; sequence FAFVVCIALLIRILIMEPFTV. At 41–265 the chain is on the periplasmic side; that stretch reads PTGSMKATIL…IFRNLYNTDE (225 aa). Catalysis depends on residues S44 and K107.

Belongs to the peptidase S26 family.

The protein localises to the cell inner membrane. The catalysed reaction is Cleavage of hydrophobic, N-terminal signal or leader sequences from secreted and periplasmic proteins.. This chain is Signal peptidase I (lepB), found in Rickettsia canadensis (strain McKiel).